The primary structure comprises 179 residues: NAD(P)H-quinone oxidoreductase subunit I, chloroplastic (179 aa).

2 consecutive 4Fe-4S ferredoxin-type domains span residues 55-84 and 95-124; these read GRIH…VDWR and LNYS…MTEE. Residues C64, C67, C70, C74, C104, C107, C110, and C114 each coordinate [4Fe-4S] cluster.

This sequence belongs to the complex I 23 kDa subunit family. As to quaternary structure, NDH is composed of at least 16 different subunits, 5 of which are encoded in the nucleus. [4Fe-4S] cluster serves as cofactor.

It localises to the plastid. The protein resides in the chloroplast thylakoid membrane. The enzyme catalyses a plastoquinone + NADH + (n+1) H(+)(in) = a plastoquinol + NAD(+) + n H(+)(out). It carries out the reaction a plastoquinone + NADPH + (n+1) H(+)(in) = a plastoquinol + NADP(+) + n H(+)(out). Functionally, NDH shuttles electrons from NAD(P)H:plastoquinone, via FMN and iron-sulfur (Fe-S) centers, to quinones in the photosynthetic chain and possibly in a chloroplast respiratory chain. The immediate electron acceptor for the enzyme in this species is believed to be plastoquinone. Couples the redox reaction to proton translocation, and thus conserves the redox energy in a proton gradient. In Nuphar advena (Common spatterdock), this protein is NAD(P)H-quinone oxidoreductase subunit I, chloroplastic.